We begin with the raw amino-acid sequence, 237 residues long: Protein FEV (237 aa).

Positions 47-127 (IQLWQFLLEL…HGKRYAYRFD (81 aa)) form a DNA-binding region, ETS. The interval 129–237 (QGLAQACQPP…AASHLGGHYH (109 aa)) is may mediate active transcriptional repression.

Belongs to the ETS family. In terms of tissue distribution, expressed in central serotonergic neurons.

It is found in the nucleus. Functions as a transcriptional regulator. May function as a transcriptional repressor. Functions in the differentiation and the maintenance of the central serotonergic neurons. May play a role in cell growth. The polypeptide is Protein FEV (Fev) (Mus musculus (Mouse)).